Here is an 88-residue protein sequence, read N- to C-terminus: Defensin-like protein 24 (88 aa).

A signal peptide spans 1–23 (MASSKFVLFAILALSLLLSGTEA). 4 cysteine pairs are disulfide-bonded: C37/C87, C47/C72, C56/C83, and C60/C85.

It belongs to the DEFL family.

It localises to the secreted. The sequence is that of Defensin-like protein 24 from Arabidopsis thaliana (Mouse-ear cress).